The chain runs to 126 residues: Aspartate 1-decarboxylase (126 aa).

Residue serine 25 is the Schiff-base intermediate with substrate; via pyruvic acid of the active site. Position 25 is a pyruvic acid (Ser) (serine 25). Threonine 57 serves as a coordination point for substrate. The active-site Proton donor is the tyrosine 58. Position 73–75 (73–75 (GAA)) interacts with substrate.

This sequence belongs to the PanD family. As to quaternary structure, heterooctamer of four alpha and four beta subunits. Requires pyruvate as cofactor. In terms of processing, is synthesized initially as an inactive proenzyme, which is activated by self-cleavage at a specific serine bond to produce a beta-subunit with a hydroxyl group at its C-terminus and an alpha-subunit with a pyruvoyl group at its N-terminus.

Its subcellular location is the cytoplasm. It carries out the reaction L-aspartate + H(+) = beta-alanine + CO2. The protein operates within cofactor biosynthesis; (R)-pantothenate biosynthesis; beta-alanine from L-aspartate: step 1/1. Functionally, catalyzes the pyruvoyl-dependent decarboxylation of aspartate to produce beta-alanine. The chain is Aspartate 1-decarboxylase from Acetivibrio thermocellus (strain ATCC 27405 / DSM 1237 / JCM 9322 / NBRC 103400 / NCIMB 10682 / NRRL B-4536 / VPI 7372) (Clostridium thermocellum).